Reading from the N-terminus, the 886-residue chain is Chitin synthase 3 (886 aa).

Disordered stretches follow at residues 1–70 (MQQG…YQTD) and 86–138 (PYEP…AGGG). The segment covering 7–17 (LDDRPYGRPEQ) has biased composition (basic and acidic residues). The segment covering 37 to 56 (PSDQLQLNAAQSVDNLSRNS) has biased composition (polar residues). N-linked (GlcNAc...) asparagine glycosylation occurs at Asn51. Residues 106-122 (YDHDDLRPMLPHQDSHA) are compositionally biased toward basic and acidic residues. An N-linked (GlcNAc...) asparagine glycan is attached at Asn196. 7 helical membrane-spanning segments follow: residues 428–448 (SAFGFISVLPGAFSAYRYVAL), 526–546 (RWLNGSFFAAIYAIAHFYQFF), 556–576 (VMLFIEFIFHTINMVFAWFAV), 602–622 (ILGVVFTWLYGVALFTCFVLS), 637–657 (MVYFWAIIMVYLMFAAIFIAV), 683–703 (TLIVSVMSTYGIWFLASFLMF), and 712–732 (FVQYMLLTPTYINILNVYAFC). Residues 745–768 (DQAEKLPSVSTKDGSGKTDLPDES) are disordered. 2 helical membrane passes run 813–833 (VLAWMITNFGLAAVVLSAAGL) and 858–878 (VVLWSVAGLAAFKFIGAMWFL).

The protein belongs to the chitin synthase family. Class I subfamily.

Its subcellular location is the cell membrane. It carries out the reaction [(1-&gt;4)-N-acetyl-beta-D-glucosaminyl](n) + UDP-N-acetyl-alpha-D-glucosamine = [(1-&gt;4)-N-acetyl-beta-D-glucosaminyl](n+1) + UDP + H(+). Polymerizes chitin, a structural polymer of the cell wall and septum, by transferring the sugar moiety of UDP-GlcNAc to the non-reducing end of the growing chitin polymer. Involved in tolerance to hyperosmotic conditions. CHS3 is the only V.dahliae chitin synthase that is not involved in virulence. In Verticillium dahliae (strain VdLs.17 / ATCC MYA-4575 / FGSC 10137) (Verticillium wilt), this protein is Chitin synthase 3.